The following is a 516-amino-acid chain: Delta(24)-sterol reductase (516 aa).

The first 22 residues, 1–22 (MEPAVSLAVCALLFLLWVRVKG), serve as a signal peptide directing secretion. The Lumenal segment spans residues 23–31 (LEFVLIHQR). A helical transmembrane segment spans residues 32 to 52 (WVFVCLFLLPLSLIFDIYYYV). Residues 53–516 (RAWVVFKLSS…YDKICKAARH (464 aa)) are Cytoplasmic-facing. One can recognise an FAD-binding PCMH-type domain in the interval 58 to 234 (FKLSSAPRLH…VAAEIRIIPA (177 aa)). 163–175 (TVGGLIMGTGIES) is an FAD binding site.

The protein belongs to the FAD-binding oxidoreductase/transferase type 4 family. In terms of assembly, interacts with DHCR7; this interaction regulates DHCR7 activity. The cofactor is FAD.

The protein localises to the endoplasmic reticulum membrane. Its subcellular location is the golgi apparatus membrane. The enzyme catalyses cholesterol + NADP(+) = desmosterol + NADPH + H(+). It catalyses the reaction lanosterol + NADPH + H(+) = 24,25-dihydrolanosterol + NADP(+). It carries out the reaction 5alpha-cholest-8-en-3beta-ol + NADP(+) = zymosterol + NADPH + H(+). It participates in steroid biosynthesis; cholesterol biosynthesis. Functionally, catalyzes the reduction of the delta-24 double bond of sterol intermediates during cholesterol biosynthesis. In addition to its cholesterol-synthesizing activity, can protect cells from oxidative stress by reducing caspase 3 activity during apoptosis induced by oxidative stress. Also protects against amyloid-beta peptide-induced apoptosis. The polypeptide is Delta(24)-sterol reductase (DHCR24) (Macaca fascicularis (Crab-eating macaque)).